Here is a 616-residue protein sequence, read N- to C-terminus: MPTAPALGALLLLLGALTPGHQEKLFHSRDHSDLQPSPQHQAELVTDLQSAQQFLSKYGWTEPVKWEGTSSKNAAELPRYGDADLMQEGASISRYGQEFPLEPTQAPAFVEALRKFQTLNGLPATGKLDDSTIAAMNKPRCGVPDNQIGKESAIVKSNSNNVTEKASGKSLNTTTNQNPENGTSTSKIRKKRFLQMLAAPVRYKDQANQGSTVRGAFSKKLLKWRLIGEGYSSQLSIDEQRYVFKTAFRMWSEVMPLDFEEDLTSPMSLIDVKLGFGRGRHLGCTRSFDGSGQEFAHAWFLGDIHFDDDEHFTAPSSDSGISLLKVAVHEIGHVLGLSHIYQTGSIMQPNYIPQEAGFELDWTDRKAIQMLYGTCEGSFDAVFDWIWKERNQYGELVLRYNTYFFRNAWYWLYENRKNRTRYGDPVTVSLGWHGIPAEGIDAFVHVWTWTEDATYFFKGTQYWRYDSENDQAYIKDAQGNQYPRLISEGFPKIPSPINTAFFDRRDQFIYFFKDAHVYAFDVKRNMVANHYPKRIIDVFPAVVRNNHPFGNIDAAYYAYTHNSIFLFKGKEYWKVVSDKDRQQNPKLPRNGLFLKKNISEQWTDICNVHSSMLKMR.

The signal sequence occupies residues 1–22 (MPTAPALGALLLLLGALTPGHQ). A propeptide spanning residues 23-192 (EKLFHSRDHS…TSTSKIRKKR (170 aa)) is cleaved from the precursor. Positions 139–146 (PRCGVPDN) match the Cysteine switch motif. C141 is a Zn(2+) binding site. The tract at residues 157 to 186 (SNSNNVTEKASGKSLNTTTNQNPENGTSTS) is disordered. 3 N-linked (GlcNAc...) asparagine glycosylation sites follow: N161, N172, and N181. Residue H329 participates in Zn(2+) binding. The active site involves E330. 2 residues coordinate Zn(2+): H333 and H339. The cysteines at positions 375 and 606 are disulfide-linked. 4 Hemopexin repeats span residues 376-435 (EGSF…WHGI), 437-493 (AEGI…FPKI), 494-542 (PSPI…FPAV), and 549-605 (FGNI…WTDI). N-linked (GlcNAc...) asparagine glycosylation occurs at N418. An N-linked (GlcNAc...) asparagine glycan is attached at N597.

The protein belongs to the peptidase M10A family. Requires Zn(2+) as cofactor. It depends on Ca(2+) as a cofactor. The precursor is cleaved by a furin endopeptidase.

The protein resides in the secreted. Its function is as follows. May play a role in gastrulation-related cell movement. Plays a specialized role in the generation of left-right asymmetry during embryogenesis. May act as a negative regulator of the NOTCH-signaling pathway. The chain is Matrix metalloproteinase-21 (MMP21) from Cynops pyrrhogaster (Japanese fire-bellied newt).